Reading from the N-terminus, the 178-residue chain is Transcriptional repressor NrdR (178 aa).

A disordered region spans residues 1-21; it reads MRCPFCGHEDTQVKDSRPHED. The segment at 3-34 is a zinc-finger region; it reads CPFCGHEDTQVKDSRPHEDGAAIRRRRICAAC. Residues 7–21 show a composition bias toward basic and acidic residues; the sequence is GHEDTQVKDSRPHED. Residues 49–139 form the ATP-cone domain; sequence LYVVKADDRR…VHWDFRETKD (91 aa).

This sequence belongs to the NrdR family. Zn(2+) serves as cofactor.

Its function is as follows. Negatively regulates transcription of bacterial ribonucleotide reductase nrd genes and operons by binding to NrdR-boxes. This chain is Transcriptional repressor NrdR, found in Gluconacetobacter diazotrophicus (strain ATCC 49037 / DSM 5601 / CCUG 37298 / CIP 103539 / LMG 7603 / PAl5).